Reading from the N-terminus, the 323-residue chain is Olfactory receptor 52B2 (323 aa).

Topologically, residues 1–27 (MSHTNVTIFHPAVFVLPGIPGLEAYHI) are extracellular. Asn5 carries an N-linked (GlcNAc...) asparagine glycan. Residues 28-48 (WLSIPLCLIYITAVLGNSILI) traverse the membrane as a helical segment. Residues 49 to 56 (VVIVMERN) lie on the Cytoplasmic side of the membrane. The chain crosses the membrane as a helical span at residues 57-77 (LHVPMYFFLSMLAVMDILLST). Residues 78-101 (TTVPKALAIFWLQAHNIAFDACVT) lie on the Extracellular side of the membrane. An intrachain disulfide couples Cys99 to Cys191. The chain crosses the membrane as a helical span at residues 102 to 122 (QGFFVHMMFVGESAILLAMAF). Residues 123-141 (DRFVAICAPLRYTTVLTWP) are Cytoplasmic-facing. The helical transmembrane segment at 142-162 (VVGRIALAVITRSFCIIFPVI) threads the bilayer. Over 163–198 (FLLKRLPFCLTNIVPHSYCEHIGVARLACADITVNI) the chain is Extracellular. The helical transmembrane segment at 199-219 (WYGFSVPIVMVILDVILIAVS) threads the bilayer. The Cytoplasmic portion of the chain corresponds to 220–239 (YSLILRAVFRLPSQDARHKA). Residues 240 to 260 (LSTCGSHLCVILMFYVPSFFT) form a helical membrane-spanning segment. Over 261-275 (LLTHHFGRNIPQHVH) the chain is Extracellular. A helical membrane pass occupies residues 276–296 (ILLANLYVAVPPMLNPIVYGV). Residues 297 to 323 (KTKQIREGVAHRFFDIKTWCCTSPLGS) are Cytoplasmic-facing.

Belongs to the G-protein coupled receptor 1 family.

The protein resides in the cell membrane. Odorant receptor. The polypeptide is Olfactory receptor 52B2 (OR52B2) (Homo sapiens (Human)).